The sequence spans 407 residues: MPRVDDDAVGVPLTGNGRGAVMTEAYVIDAVRTAVGKRGGALAGIHPVDLGALAWRGLLDRTDIDPAAVDDVIAGCVDAIGGQAGNIARLSWLAAGYPEEVPGVTVDRQCGSSQQAISFGAQAIMSGTADVIVAGGVQNMSQIPISSAMTVGEQFGFTSPTNESKQWLHRYGDQEISQFRGSELIAEKWNLSREEMERYSLTSHERAFAAIRAGHFENEIITVETESGPFRVDEGPRESSLEKMAGLQPLVEGGRLTAAMASQISDGASAVLLASERAVKDHGLRPRARIHHISARAADPVFMLTGPIPATRYALDKTGLAIDDIDTVEINEAFAPVVMAWLKEIKADPAKVNPNGGAIALGHPLGATGAKLFTTMLGELERIGGRYGLQTMCEGGGTANVTIIERL.

Cysteine 110 acts as the Acyl-thioester intermediate in catalysis. CoA contacts are provided by residues glutamine 178, 237 to 239 (RES), and serine 262. Catalysis depends on proton acceptor residues histidine 363 and cysteine 393. Glycine 395 is a substrate binding site.

Belongs to the thiolase-like superfamily. Thiolase family.

The catalysed reaction is an acyl-CoA + acetyl-CoA = a 3-oxoacyl-CoA + CoA. The enzyme catalyses 6-methyl-3,7-dioxodecanedioyl-CoA + CoA = 4-methyl-5-oxo-octanedioyl-CoA + acetyl-CoA. Its pathway is steroid metabolism; cholesterol degradation. Functionally, may be involved in the final steps of cholesterol and steroid degradation. Catalyzes the formation of 4-methyl-5-oxo-octanedioyl-CoA (MOODA-CoA) and acetyl-CoA from 6-methyl-3,7-dioxodecanedioyl-CoA (MeDODA-CoA) and coenzyme A. The polypeptide is Steroid 3-ketoacyl-CoA thiolase FadA6 (Mycobacterium tuberculosis (strain ATCC 25618 / H37Rv)).